Consider the following 384-residue polypeptide: F-box only protein 5-B (384 aa).

Disordered regions lie at residues 1–20 (MMCG…KSSA) and 79–106 (DEEN…ETDS). Low complexity predominate over residues 9 to 19 (PSPKKLLSKSS). Over residues 83 to 99 (SSLQDSGYSSILQNDSP) the composition is skewed to polar residues. An F-box domain is found at 191–238 (AELFHRDFKHLLTKILRHLNAMDLINVIGVSTTWRKILQKDNWAYNTY). Residues 311 to 359 (SLKACVDCGSPAKYDSYLHRAICTRESCKLDFCTLCSCKYHSSKSCLIS) form a ZBR-type zinc finger. Cys315, Cys318, Cys333, Cys338, Cys343, Cys346, His351, and Cys356 together coordinate Zn(2+).

In terms of assembly, part of a SCF (SKP1-cullin-F-box) protein ligase complex. Interacts with btrc. Interacts with skp1. Interacts with cdc20. Interacts with pin1; stabilizes fbxo5 by preventing its association with btrc in an isomerization-dependent pathway; this interaction is present during G2 phase and prevents fbxo5 degradation. Interacts with plk1. Post-translationally, proteolysed; proteolysis is induced by both cyclin B-cdk1 and cyclin A-cdk1/2 complex through probable phosphorylation. Proteolysis is inhibited by pin1 during G2.

Its subcellular location is the nucleus. The protein localises to the cytoplasm. The protein resides in the cytoskeleton. It localises to the spindle. It is found in the microtubule organizing center. Its subcellular location is the centrosome. It functions in the pathway protein modification; protein ubiquitination. In terms of biological role, regulates progression through early mitosis by inhibiting the anaphase promoting complex/cyclosome (APC). Binds to the APC activators cdc20 to prevent APC activation. Can also bind directly to the APC to inhibit substrate-binding. Required to arrest unfertilized eggs at metaphase of meiosis II, by preventing their release from metaphase of meiosis II, through inhibition of APC-dependent cyclin B destruction leading to stabilization of cyclin B-cdk1 complex activity. The sequence is that of F-box only protein 5-B (fbxo5-b) from Xenopus laevis (African clawed frog).